Consider the following 232-residue polypeptide: UPF0758 protein Amet_2289 (232 aa).

Residues 110–232 (RIKSPDDVSN…YYSLKEKSMM (123 aa)) form the MPN domain. Zn(2+)-binding residues include His181, His183, and Asp194. The short motif at 181–194 (HNHPSGDPSPSGED) is the JAMM motif element.

It belongs to the UPF0758 family.

This chain is UPF0758 protein Amet_2289, found in Alkaliphilus metalliredigens (strain QYMF).